Here is a 129-residue protein sequence, read N- to C-terminus: ATP synthase epsilon chain (129 aa).

It belongs to the ATPase epsilon chain family. In terms of assembly, F-type ATPases have 2 components, CF(1) - the catalytic core - and CF(0) - the membrane proton channel. CF(1) has five subunits: alpha(3), beta(3), gamma(1), delta(1), epsilon(1). CF(0) has three main subunits: a, b and c.

The protein localises to the cell inner membrane. Its function is as follows. Produces ATP from ADP in the presence of a proton gradient across the membrane. The polypeptide is ATP synthase epsilon chain (Campylobacter concisus (strain 13826)).